We begin with the raw amino-acid sequence, 235 residues long: Cytidylate kinase (235 aa).

16 to 24 (GPAASGKST) is a binding site for ATP.

Belongs to the cytidylate kinase family. Type 1 subfamily.

The protein localises to the cytoplasm. It catalyses the reaction CMP + ATP = CDP + ADP. It carries out the reaction dCMP + ATP = dCDP + ADP. The protein is Cytidylate kinase of Chlorobaculum tepidum (strain ATCC 49652 / DSM 12025 / NBRC 103806 / TLS) (Chlorobium tepidum).